The primary structure comprises 275 residues: Membrane protein insertase YidC (275 aa).

The N-terminal stretch at 1 to 22 (MKKYKRLLLMAGLVTLVFVLSA) is a signal peptide. A lipid anchor (N-palmitoyl cysteine) is attached at C23. The S-diacylglycerol cysteine moiety is linked to residue C23. 4 helical membrane passes run 53-73 (LGGS…IILL), 127-147 (YIGC…YQAI), 169-189 (YLIL…LSSM), and 206-226 (PAMI…YWVV). Residues 249–266 (EEAARQAKARERALERAK) show a composition bias toward basic and acidic residues. Residues 249–275 (EEAARQAKARERALERAKSPKKKGKKK) form a disordered region.

This sequence belongs to the OXA1/ALB3/YidC family. Type 2 subfamily.

It localises to the cell membrane. In terms of biological role, required for the insertion and/or proper folding and/or complex formation of integral membrane proteins into the membrane. Involved in integration of membrane proteins that insert both dependently and independently of the Sec translocase complex, as well as at least some lipoproteins. The chain is Membrane protein insertase YidC from Enterococcus faecalis (strain ATCC 700802 / V583).